A 151-amino-acid polypeptide reads, in one-letter code: Arginine repressor (151 aa).

Belongs to the ArgR family.

It is found in the cytoplasm. It participates in amino-acid biosynthesis; L-arginine biosynthesis [regulation]. In terms of biological role, regulates arginine biosynthesis genes. This chain is Arginine repressor, found in Haemophilus influenzae (strain PittGG).